The primary structure comprises 129 residues: Small ribosomal subunit protein eS6 (129 aa).

Positions 53-88 (TGGSDTSGRPMRPDVRGVTTKEIMSDGGVGFEPTTD) are disordered.

It belongs to the eukaryotic ribosomal protein eS6 family.

In Haloarcula marismortui (strain ATCC 43049 / DSM 3752 / JCM 8966 / VKM B-1809) (Halobacterium marismortui), this protein is Small ribosomal subunit protein eS6 (rps6e).